Reading from the N-terminus, the 97-residue chain is uncharacterized protein (97 aa).

This is an uncharacterized protein from Bacillus subtilis (strain 168).